We begin with the raw amino-acid sequence, 424 residues long: MTLRPGTMRLACMFSSILLFGAAGLLLFISLQDPTELAPQQVPGIKFNIRPRQPHHDLPPGGSQDGDLKEPTERVTRDLSSGAPRGRNLPAPDQPQPPLQRGTRLRLRQRRRRLLIKKMPAAATIPANSSDAPFIRPGPGTLDGRWVSLHRSQQERKRVMQEACAKYRASSSRRAVTPRHVSRIFVEDRHRVLYCEVPKAGCSNWKRVLMVLAGLASSTADIQHNTVHYGSALKRLDTFDRQGILHRLSTYTKMLFVREPFERLVSAFRDKFEHPNSYYHPVFGKAILARYRANASREALRTGSGVRFPEFVQYLLDVHRPVGMDIHWDHVSRLCSPCLIDYDFVGKFESMEDDANFFLSLIRAPRNLTFPRFKDRHSQEARTTARIAHQYFAQLSALQRQRTYDFYYMDYLMFNYSKPFADLY.

Residues 1–10 lie on the Cytoplasmic side of the membrane; that stretch reads MTLRPGTMRL. The helical; Signal-anchor for type II membrane protein transmembrane segment at 11-31 threads the bilayer; sequence ACMFSSILLFGAAGLLLFISL. The Lumenal segment spans residues 32–424; that stretch reads QDPTELAPQQ…NYSKPFADLY (393 aa). The segment at 47-107 is disordered; it reads FNIRPRQPHH…PLQRGTRLRL (61 aa). Residues 66-77 are compositionally biased toward basic and acidic residues; it reads GDLKEPTERVTR. N-linked (GlcNAc...) asparagine glycosylation occurs at Asn-128. Residues 198–204 and 258–266 each bind 3'-phosphoadenylyl sulfate; these read PKAGCSN and REPFERLVS. Asn-294, Asn-367, and Asn-415 each carry an N-linked (GlcNAc...) asparagine glycan.

It belongs to the sulfotransferase 2 family. In terms of tissue distribution, predominantly expressed in pituitary gland. In brain, it is expressed in pituitary gland, cerebellum, medulla oblongata, pons, thalamus and spinal cord. Expressed in the epidermis. Expressed at lower level in lung, spleen, adrenal gland, placenta, prostate, testis, mammary gland and trachea.

The protein localises to the golgi apparatus membrane. Functionally, catalyzes the transfer of sulfate to position 4 of non-reducing N-acetylgalactosamine (GalNAc) residues in both N-glycans and O-glycans. Required for biosynthesis of glycoprotein hormones lutropin and thyrotropin, by mediating sulfation of their carbohydrate structures. Only active against terminal GalNAcbeta1,GalNAcbeta. Not active toward chondroitin. In Homo sapiens (Human), this protein is Carbohydrate sulfotransferase 8 (CHST8).